The chain runs to 210 residues: Thymidylate kinase (210 aa).

A dGMP-binding site is contributed by Asp17. Asp17 is a binding site for dTMP. The ATP site is built by Arg18, Ser19, Gly20, Lys21, Ser22, and Thr23. Residues Arg47, Phe74, Arg78, Arg99, and Tyr107 each coordinate dTMP. Positions 74, 78, 99, 107, 108, and 153 each coordinate dGMP. The interval 143–155 is LID; that stretch reads QNRSDYGEEIYEK. Arg182 is a binding site for ATP.

This sequence belongs to the thymidylate kinase family. Homodimer. Binds two dTMP molecules per dimer. Binds only one dTGP molecule per dimer.

The enzyme catalyses dTMP + ATP = dTDP + ADP. The catalysed reaction is dGMP + ATP = dGDP + ADP. It participates in pyrimidine metabolism; dTTP biosynthesis. Its activity is regulated as follows. Inhibited by deoxyguanosine (dG), deoxythymidine (dT) and azidothymidine (AZT). Functionally, catalyzes the phosphorylation of thymidine monophosphate (dTMP) to thymidine diphosphate (dTDP), the immediate precursor for the DNA building block dTTP. Can also phosphorylate dGMP and to a lesser extent GMP, dUMP and dIMP. Can use either ATP or dATP as phosphate donors in presence of Mg(2+). This is Thymidylate kinase from Plasmodium falciparum (isolate 3D7).